A 178-amino-acid polypeptide reads, in one-letter code: MNGFSTEEDSHDGPPAPPFFGQSCCLIEDAERCGRPAGNASFSKRIQKSISQRKLKLDIDKSVRHLYICDFHKNFIQSVRNKRKRKTSDDGGESPDHEVEVPEVDLFQLQVNTLRRYKRHYKIQTRPGLNKAQLAETVSRHFRNIPVNEKETLTYFIYMVKSSKSRLDQKSDSSKQVE.

2 cysteine pairs are disulfide-bonded: Cys-24/Cys-25 and Cys-33/Cys-69. An Atypical zinc finger spans residues 24–72 (CCLIEDAERCGRPAGNASFSKRIQKSISQRKLKLDIDKSVRHLYICDFH). A disordered region spans residues 80–99 (RNKRKRKTSDDGGESPDHEV). The short motif at 81 to 86 (NKRKRK) is the Nuclear localization signal (NLS) element. The tract at residues 83 to 85 (RKR) is important for DNA and phosphoinositide binding.

Belongs to the SAP30 family. As to quaternary structure, interacts with components of the histone deacetylase complex sin3a, hdac1 and hdac2. Binds histones and nucleosomes. In terms of tissue distribution, detected in embryos at 2dpf (at protein level). Widely expressed during embryogenesis and in adults.

Its subcellular location is the nucleus. It is found in the nucleolus. Functions as a transcription repressor, probably via its interaction with histone deacetylase complexes. Required for normal expression of numerous target genes. Involved in the functional recruitment of the class 1 Sin3-histone deacetylase complex (HDAC) to the nucleolus. Binds DNA, apparently without sequence-specificity, and bends bound double-stranded DNA. Binds phosphoinositol phosphates (phosphoinositol 3-phosphate, phosphoinositol 4-phosphate and phosphoinositol 5-phosphate) via the same basic sequence motif that mediates DNA binding and nuclear import. This chain is Histone deacetylase complex subunit SAP30L (sap30l), found in Danio rerio (Zebrafish).